The chain runs to 309 residues: Methionyl-tRNA formyltransferase (309 aa).

Residue 112–115 (SLLP) coordinates (6S)-5,6,7,8-tetrahydrofolate.

Belongs to the Fmt family.

The catalysed reaction is L-methionyl-tRNA(fMet) + (6R)-10-formyltetrahydrofolate = N-formyl-L-methionyl-tRNA(fMet) + (6S)-5,6,7,8-tetrahydrofolate + H(+). Functionally, attaches a formyl group to the free amino group of methionyl-tRNA(fMet). The formyl group appears to play a dual role in the initiator identity of N-formylmethionyl-tRNA by promoting its recognition by IF2 and preventing the misappropriation of this tRNA by the elongation apparatus. This chain is Methionyl-tRNA formyltransferase, found in Bartonella quintana (strain Toulouse) (Rochalimaea quintana).